The chain runs to 119 residues: Microtubule nucleation factor SSNA1 (119 aa).

Thr2 is modified (N-acetylthreonine). Residues 2–32 are important for localization to the centrosome; that stretch reads TQQGAALQNYNNELVKCIEELCQKREELCRQ. A coiled-coil region spans residues 13 to 70; it reads NELVKCIEELCQKREELCRQIQQEEDEKQRLQNEVRQLTEKLARVNENLARKIASRNE.

The protein belongs to the SSNA1 family. Self-associates to form fibrils. Also forms dimers as well as monomers. Interacts with SPAST.

The protein resides in the nucleus. The protein localises to the cytoplasm. Its subcellular location is the cytoskeleton. It localises to the microtubule organizing center. It is found in the centrosome. The protein resides in the centriole. The protein localises to the midbody. Its subcellular location is the flagellum basal body. It localises to the flagellum axoneme. It is found in the cell projection. The protein resides in the axon. Its function is as follows. Microtubule-binding protein which stabilizes dynamic microtubules by slowing growth and shrinkage at both plus and minus ends and serves as a sensor of microtubule damage, protecting microtubules from the microtubule-severing enzyme SPAST. Induces microtubule branching which is mediated by the formation of long SSNA1 fibrils which guide microtubule protofilaments to split apart from the mother microtubule and form daughter microtubules. Plays a role in axon outgrowth and branching. Required for cell division. The chain is Microtubule nucleation factor SSNA1 from Mus musculus (Mouse).